The following is a 234-amino-acid chain: UPF0502 protein Reut_B4455 (234 aa).

This sequence belongs to the UPF0502 family.

The polypeptide is UPF0502 protein Reut_B4455 (Cupriavidus pinatubonensis (strain JMP 134 / LMG 1197) (Cupriavidus necator (strain JMP 134))).